The sequence spans 164 residues: UPF0114 protein Sbal223_3668 (164 aa).

4 helical membrane passes run 15 to 35, 53 to 73, 108 to 128, and 136 to 156; these read IMAP…IKFF, LVLV…IVMV, KVAA…FMDV, and IMWY…MGYL.

Belongs to the UPF0114 family.

The protein resides in the cell membrane. This chain is UPF0114 protein Sbal223_3668, found in Shewanella baltica (strain OS223).